The primary structure comprises 360 residues: Phospho-N-acetylmuramoyl-pentapeptide-transferase (360 aa).

Helical transmembrane passes span 25–45 (RGIL…PWMI), 73–93 (TMGG…WADL), 97–117 (YVWV…VDDY), 135–155 (FWQS…APSA), 170–190 (IPLG…SSNA), 199–219 (GLAI…CYLS), 236–256 (AGEL…FLWF), 263–283 (VFMG…MAVI), 288–308 (MVLF…VIQV), and 338–358 (VIVR…ATLK).

It belongs to the glycosyltransferase 4 family. MraY subfamily. Requires Mg(2+) as cofactor.

It localises to the cell inner membrane. It carries out the reaction UDP-N-acetyl-alpha-D-muramoyl-L-alanyl-gamma-D-glutamyl-meso-2,6-diaminopimeloyl-D-alanyl-D-alanine + di-trans,octa-cis-undecaprenyl phosphate = di-trans,octa-cis-undecaprenyl diphospho-N-acetyl-alpha-D-muramoyl-L-alanyl-D-glutamyl-meso-2,6-diaminopimeloyl-D-alanyl-D-alanine + UMP. It participates in cell wall biogenesis; peptidoglycan biosynthesis. In terms of biological role, catalyzes the initial step of the lipid cycle reactions in the biosynthesis of the cell wall peptidoglycan: transfers peptidoglycan precursor phospho-MurNAc-pentapeptide from UDP-MurNAc-pentapeptide onto the lipid carrier undecaprenyl phosphate, yielding undecaprenyl-pyrophosphoryl-MurNAc-pentapeptide, known as lipid I. This is Phospho-N-acetylmuramoyl-pentapeptide-transferase from Pseudomonas syringae pv. syringae (strain B728a).